Here is a 135-residue protein sequence, read N- to C-terminus: ATP synthase epsilon chain (135 aa).

This sequence belongs to the ATPase epsilon chain family. As to quaternary structure, F-type ATPases have 2 components, CF(1) - the catalytic core - and CF(0) - the membrane proton channel. CF(1) has five subunits: alpha(3), beta(3), gamma(1), delta(1), epsilon(1). CF(0) has three main subunits: a, b and c.

The protein localises to the cell inner membrane. Produces ATP from ADP in the presence of a proton gradient across the membrane. The sequence is that of ATP synthase epsilon chain from Rhodopseudomonas palustris (strain HaA2).